The sequence spans 104 residues: Type VII secretion system extracellular protein B (104 aa).

Belongs to the WXG100 family. In terms of assembly, homodimer. When mixed with EsxA does not form heterodimers.

It localises to the secreted. Functionally, virulence factor that is important for the establishment of infection in the host. EsxB is required for EsxA synthesis as well as secretion. Mediates together with EsxA the release of S.aureus from the host cell. Also inhibits host cytokine production and thus modulates dendritic cell-mediated immunity. The chain is Type VII secretion system extracellular protein B from Staphylococcus aureus (strain MSSA476).